An 80-amino-acid chain; its full sequence is Conotoxin Vi6.2 (80 aa).

The N-terminal stretch at 1–22 (MKLTCVLITTVLFLTASQLITA) is a signal peptide. Residues 23 to 47 (DYSRDKRQYRAVRLRDEMRNFKGAR) constitute a propeptide that is removed on maturation. 3 disulfide bridges follow: Cys49–Cys62, Cys56–Cys67, and Cys61–Cys77. 4-hydroxyproline is present on residues Pro60 and Pro63.

It belongs to the conotoxin O1 superfamily. In terms of tissue distribution, expressed by the venom duct.

The protein resides in the secreted. In terms of biological role, ion channel inhibitor that inhibits the increase in intracellular calcium upon depolarization in DRG neurons. In vivo, both intraperitoneal and intracranial injections into mice induce hyperactivity. The protein is Conotoxin Vi6.2 of Conus virgo (Virgin cone).